The following is a 151-amino-acid chain: MGRMHNPGKGISQSALPYRRSVPTWLKLTSEEVQEQVTRLAKKGLRPSQIGVILRDSHGVAQVRRVTGNKIVRILKAKGMAPEIPEDLYHLIKKAVNIRKHLERNRKDKDSKYRLILVESRIHRLARYYKTKRQLPATWKYESSTASALVS.

This sequence belongs to the universal ribosomal protein uS15 family.

The protein is Small ribosomal subunit protein uS15 (RPS13) of Wuchereria bancrofti.